An 839-amino-acid chain; its full sequence is MGPRAKTISSLFFLLWVLAEPAENSDFYLPGDYLLGGLFSLHANMKGIVHLNFLQVPMCKEYEVKVIGYNLMQAMRFAVEEINNDSSLLPGVLLGYEIVDVCYISNNVQPVLYFLAHEDNLLPIQEDYSNYISRVVAVIGPDNSESVMTVANFLSLFLLPQITYSAISDELRDKVRFPALLRTTPSADHHIEAMVQLMLHFRWNWIIVLVSSDTYGRDNGQLLGERVARRDICIAFQETLPTLQPNQNMTSEERQRLVTIVDKLQQSTARVVVVFSPDLTLYHFFNEVLRQNFTGAVWIASESWAIDPVLHNLTELRHLGTFLGITIQSVPIPGFSEFREWGPQAGPPPLSRTSQSYTCNQECDNCLNATLSFNTILRLSGERVVYSVYSAVYAVAHALHSLLGCDKSTCTKRVVYPWQLLEEIWKVNFTLLDHQIFFDPQGDVALHLEIVQWQWDRSQNPFQSVASYYPLQRQLKNIQDISWHTINNTIPMSMCSKRCQSGQKKKPVGIHVCCFECIDCLPGTFLNHTEDEYECQACPNNEWSYQSETSCFKRQLVFLEWHEAPTIAVALLAALGFLSTLAILVIFWRHFQTPIVRSAGGPMCFLMLTLLLVAYMVVPVYVGPPKVSTCLCRQALFPLCFTICISCIAVRSFQIVCAFKMASRFPRAYSYWVRYQGPYVSMAFITVLKMVIVVIGMLATGLSPTTRTDPDDPKITIVSCNPNYRNSLLFNTSLDLLLSVVGFSFAYMGKELPTNYNEAKFITLSMTFYFTSSVSLCTFMSAYSGVLVTIVDLLVTVLNLLAISLGYFGPKCYMILFYPERNTPAYFNSMIQGYTMRRD.

Positions 1-19 (MGPRAKTISSLFFLLWVLA) are cleaved as a signal peptide. At 20 to 566 (EPAENSDFYL…VFLEWHEAPT (547 aa)) the chain is on the extracellular side. N84, N248, N292, N312, N368, N428, N487, and N527 each carry an N-linked (GlcNAc...) asparagine glycan. Residues 567-587 (IAVALLAALGFLSTLAILVIF) traverse the membrane as a helical segment. Residues 588 to 602 (WRHFQTPIVRSAGGP) lie on the Cytoplasmic side of the membrane. Residues 603-623 (MCFLMLTLLLVAYMVVPVYVG) form a helical membrane-spanning segment. At 624 to 635 (PPKVSTCLCRQA) the chain is on the extracellular side. Residues 636-656 (LFPLCFTICISCIAVRSFQIV) form a helical membrane-spanning segment. Residues 657–681 (CAFKMASRFPRAYSYWVRYQGPYVS) are Cytoplasmic-facing. Residues 682–702 (MAFITVLKMVIVVIGMLATGL) traverse the membrane as a helical segment. Topologically, residues 703-727 (SPTTRTDPDDPKITIVSCNPNYRNS) are extracellular. A helical membrane pass occupies residues 728–748 (LLFNTSLDLLLSVVGFSFAYM). Residues 749-760 (GKELPTNYNEAK) lie on the Cytoplasmic side of the membrane. A helical transmembrane segment spans residues 761–781 (FITLSMTFYFTSSVSLCTFMS). Over 782-784 (AYS) the chain is Extracellular. A helical membrane pass occupies residues 785–805 (GVLVTIVDLLVTVLNLLAISL). The Cytoplasmic segment spans residues 806–839 (GYFGPKCYMILFYPERNTPAYFNSMIQGYTMRRD).

Belongs to the G-protein coupled receptor 3 family. TAS1R subfamily. As to quaternary structure, forms heterodimers with TAS1R3.

Its subcellular location is the cell membrane. Its function is as follows. Putative taste receptor. TAS1R2/TAS1R3 recognizes diverse natural and synthetic sweeteners. The protein is Taste receptor type 1 member 2 (TAS1R2) of Homo sapiens (Human).